The sequence spans 240 residues: Orotidine 5'-phosphate decarboxylase (240 aa).

Substrate is bound by residues aspartate 15, lysine 37, 64–73, threonine 127, arginine 188, glutamine 197, glycine 217, and arginine 218; that span reads DLKYHDIPNT. The active-site Proton donor is lysine 66.

The protein belongs to the OMP decarboxylase family. Type 1 subfamily. Homodimer.

It catalyses the reaction orotidine 5'-phosphate + H(+) = UMP + CO2. It functions in the pathway pyrimidine metabolism; UMP biosynthesis via de novo pathway; UMP from orotate: step 2/2. Catalyzes the decarboxylation of orotidine 5'-monophosphate (OMP) to uridine 5'-monophosphate (UMP). The protein is Orotidine 5'-phosphate decarboxylase of Citrifermentans bemidjiense (strain ATCC BAA-1014 / DSM 16622 / JCM 12645 / Bem) (Geobacter bemidjiensis).